Reading from the N-terminus, the 141-residue chain is Nucleoside diphosphate kinase (141 aa).

Residues Lys-11, Phe-59, Arg-87, Thr-93, Arg-104, and Asn-114 each contribute to the ATP site. Residue His-117 is the Pros-phosphohistidine intermediate of the active site.

Belongs to the NDK family. As to quaternary structure, homotetramer. Mg(2+) serves as cofactor.

It localises to the cytoplasm. The enzyme catalyses a 2'-deoxyribonucleoside 5'-diphosphate + ATP = a 2'-deoxyribonucleoside 5'-triphosphate + ADP. The catalysed reaction is a ribonucleoside 5'-diphosphate + ATP = a ribonucleoside 5'-triphosphate + ADP. Functionally, major role in the synthesis of nucleoside triphosphates other than ATP. The ATP gamma phosphate is transferred to the NDP beta phosphate via a ping-pong mechanism, using a phosphorylated active-site intermediate. The protein is Nucleoside diphosphate kinase of Burkholderia ambifaria (strain MC40-6).